Consider the following 255-residue polypeptide: CDP-diacylglycerol pyrophosphatase (255 aa).

Residues 5–27 traverse the membrane as a helical segment; it reads LLITVALIAVLALTTLVAWRYLF.

Belongs to the Cdh family.

It localises to the cell inner membrane. The enzyme catalyses a CDP-1,2-diacyl-sn-glycerol + H2O = a 1,2-diacyl-sn-glycero-3-phosphate + CMP + 2 H(+). Its pathway is phospholipid metabolism; CDP-diacylglycerol degradation; phosphatidate from CDP-diacylglycerol: step 1/1. This Cronobacter sakazakii (strain ATCC BAA-894) (Enterobacter sakazakii) protein is CDP-diacylglycerol pyrophosphatase.